Reading from the N-terminus, the 338-residue chain is Formamidase (338 aa).

Positions 15–257 (VVIGLAQLAL…DEIVCCELRP (243 aa)) constitute a CN hydrolase domain. The Proton acceptor role is filled by Glu-61. Catalysis depends on Lys-130, which acts as the Proton donor. Cys-163 serves as the catalytic Nucleophile.

The protein belongs to the carbon-nitrogen hydrolase superfamily. Aliphatic amidase family.

It catalyses the reaction formamide + H2O = formate + NH4(+). Its function is as follows. Is an aliphatic amidase with a restricted substrate specificity, as it only hydrolyzes formamide. The polypeptide is Formamidase (Pseudomonas syringae pv. tomato (strain ATCC BAA-871 / DC3000)).